The primary structure comprises 241 residues: Tetraspanin-1 (241 aa).

3 helical membrane-spanning segments follow: residues 12 to 32 (ILFNLLIFLCGAALLAVGIWV), 53 to 73 (FVNVGYFLIAAGAVLFILGFL), and 89 to 109 (FFSILLIIFIAEIAGAVVALV). Residue asparagine 154 is glycosylated (N-linked (GlcNAc...) asparagine). A helical membrane pass occupies residues 212 to 232 (AVTVGGVAVGVAALELAAMVV).

This sequence belongs to the tetraspanin (TM4SF) family. Interacts with SLC19A2. Interacts with NTRK1/TRKA.

It localises to the cell membrane. It is found in the lysosome membrane. Its function is as follows. Structural component of specialized membrane microdomains known as tetraspanin-enriched microdomains (TERMs), which act as platforms for receptor clustering and signaling. Participates thereby in diverse biological functions such as cell signal transduction, adhesion, migration and protein trafficking. Regulates neuronal differentiation in response to NGF by facilitating NGF-mediated activation of NTRK1/TRKA receptor tyrosine kinase and subsequent downstream signaling pathways. Plays a role in the inhibition of TNFalpha-induced apoptosis. Mechanistically, inhibits the NF-kappa-B signaling pathway by blocking phosphorylation of CHUK. Also promotes the stability of the thiamine transporter 1/SLC19A2 in intestinal epithelial cells leading to an increase of thiamine uptake process. This Rattus norvegicus (Rat) protein is Tetraspanin-1 (Tspan1).